A 224-amino-acid polypeptide reads, in one-letter code: Phosphoglycolate phosphatase (224 aa).

Aspartate 11 functions as the Nucleophile in the catalytic mechanism. Aspartate 11, aspartate 13, and aspartate 177 together coordinate Mg(2+).

It belongs to the HAD-like hydrolase superfamily. CbbY/CbbZ/Gph/YieH family. It depends on Mg(2+) as a cofactor.

It catalyses the reaction 2-phosphoglycolate + H2O = glycolate + phosphate. It participates in organic acid metabolism; glycolate biosynthesis; glycolate from 2-phosphoglycolate: step 1/1. Specifically catalyzes the dephosphorylation of 2-phosphoglycolate. Is involved in the dissimilation of the intracellular 2-phosphoglycolate formed during the DNA repair of 3'-phosphoglycolate ends, a major class of DNA lesions induced by oxidative stress. This chain is Phosphoglycolate phosphatase, found in Haemophilus influenzae (strain ATCC 51907 / DSM 11121 / KW20 / Rd).